We begin with the raw amino-acid sequence, 945 residues long: Leucine--tRNA ligase (945 aa).

Residues 66–77 (PYPSGTGLHVGH) carry the 'HIGH' region motif. A 'KMSKS' region motif is present at residues 716–720 (KMGKS). K719 contacts ATP.

The protein belongs to the class-I aminoacyl-tRNA synthetase family.

Its subcellular location is the cytoplasm. The enzyme catalyses tRNA(Leu) + L-leucine + ATP = L-leucyl-tRNA(Leu) + AMP + diphosphate. The sequence is that of Leucine--tRNA ligase from Rhodococcus jostii (strain RHA1).